Reading from the N-terminus, the 378-residue chain is tRNA-specific 2-thiouridylase MnmA (378 aa).

Residues 9-16 (GVSGGVDS) and Met35 each bind ATP. The interaction with target base in tRNA stretch occupies residues 94 to 96 (NPD). Cys99 (nucleophile) is an active-site residue. Residues Cys99 and Cys195 are joined by a disulfide bond. ATP is bound at residue Gly123. An interaction with tRNA region spans residues 145-147 (KDQ). The active-site Cysteine persulfide intermediate is the Cys195. An interaction with tRNA region spans residues 307 to 308 (RY).

This sequence belongs to the MnmA/TRMU family.

The protein resides in the cytoplasm. It carries out the reaction S-sulfanyl-L-cysteinyl-[protein] + uridine(34) in tRNA + AH2 + ATP = 2-thiouridine(34) in tRNA + L-cysteinyl-[protein] + A + AMP + diphosphate + H(+). Its function is as follows. Catalyzes the 2-thiolation of uridine at the wobble position (U34) of tRNA, leading to the formation of s(2)U34. This is tRNA-specific 2-thiouridylase MnmA from Xanthomonas axonopodis pv. citri (strain 306).